A 420-amino-acid chain; its full sequence is Acetyl-CoA acetyltransferase, mitochondrial (420 aa).

Residues 1–26 (MTSRALYSTRSQLCRHLAHKYLSRSY) constitute a mitochondrion transit peptide. The active-site Acyl-thioester intermediate is the Cys-119. CoA-binding positions include Tyr-212, 251–253 (KVD), and Lys-256. Tyr-212 is a binding site for K(+). K(+)-binding residues include Ala-273, Ala-274, and Ala-276. Ser-277 is a CoA binding site. Residue Val-374 participates in K(+) binding. The Proton donor/acceptor role is filled by Cys-406.

Belongs to the thiolase-like superfamily. Thiolase family. In terms of assembly, homotetramer.

The protein localises to the mitochondrion. It catalyses the reaction 2 acetyl-CoA = acetoacetyl-CoA + CoA. It carries out the reaction propanoyl-CoA + acetyl-CoA = 2-methyl-3-oxobutanoyl-CoA + CoA. Its pathway is lipid metabolism; fatty acid beta-oxidation. This is one of the enzymes that catalyzes the last step of the mitochondrial beta-oxidation pathway, an aerobic process breaking down fatty acids into acetyl-CoA. Using free coenzyme A/CoA, catalyzes the thiolytic cleavage of medium- to long-chain 3-oxoacyl-CoAs into acetyl-CoA and a fatty acyl-CoA shortened by two carbon atoms. The activity of the enzyme is reversible and it can also catalyze the condensation of two acetyl-CoA molecules into acetoacetyl-CoA. Thereby, it plays a major role in ketone body metabolism. The polypeptide is Acetyl-CoA acetyltransferase, mitochondrial (acat1) (Danio rerio (Zebrafish)).